The following is a 929-amino-acid chain: Isoleucine--tRNA ligase (929 aa).

The 'HIGH' region motif lies at 58 to 68 (PYANGDIHIGH). Glu563 serves as a coordination point for L-isoleucyl-5'-AMP. The 'KMSKS' region motif lies at 605-609 (KMSKS). Lys608 is an ATP binding site. Residues Cys892, Cys895, Cys912, and Cys915 each contribute to the Zn(2+) site.

The protein belongs to the class-I aminoacyl-tRNA synthetase family. IleS type 1 subfamily. In terms of assembly, monomer. The cofactor is Zn(2+).

Its subcellular location is the cytoplasm. It catalyses the reaction tRNA(Ile) + L-isoleucine + ATP = L-isoleucyl-tRNA(Ile) + AMP + diphosphate. In terms of biological role, catalyzes the attachment of isoleucine to tRNA(Ile). As IleRS can inadvertently accommodate and process structurally similar amino acids such as valine, to avoid such errors it has two additional distinct tRNA(Ile)-dependent editing activities. One activity is designated as 'pretransfer' editing and involves the hydrolysis of activated Val-AMP. The other activity is designated 'posttransfer' editing and involves deacylation of mischarged Val-tRNA(Ile). The protein is Isoleucine--tRNA ligase of Neisseria meningitidis serogroup B (strain ATCC BAA-335 / MC58).